A 262-amino-acid chain; its full sequence is Acyl-[acyl-carrier-protein]--UDP-N-acetylglucosamine O-acyltransferase (262 aa).

It belongs to the transferase hexapeptide repeat family. LpxA subfamily. As to quaternary structure, homotrimer.

Its subcellular location is the cytoplasm. The catalysed reaction is a (3R)-hydroxyacyl-[ACP] + UDP-N-acetyl-alpha-D-glucosamine = a UDP-3-O-[(3R)-3-hydroxyacyl]-N-acetyl-alpha-D-glucosamine + holo-[ACP]. Its pathway is glycolipid biosynthesis; lipid IV(A) biosynthesis; lipid IV(A) from (3R)-3-hydroxytetradecanoyl-[acyl-carrier-protein] and UDP-N-acetyl-alpha-D-glucosamine: step 1/6. Involved in the biosynthesis of lipid A, a phosphorylated glycolipid that anchors the lipopolysaccharide to the outer membrane of the cell. The sequence is that of Acyl-[acyl-carrier-protein]--UDP-N-acetylglucosamine O-acyltransferase from Shigella dysenteriae serotype 1 (strain Sd197).